A 503-amino-acid chain; its full sequence is Aspartyl/glutamyl-tRNA(Asn/Gln) amidotransferase subunit B (503 aa).

This sequence belongs to the GatB/GatE family. GatB subfamily. In terms of assembly, heterotrimer of A, B and C subunits.

The catalysed reaction is L-glutamyl-tRNA(Gln) + L-glutamine + ATP + H2O = L-glutaminyl-tRNA(Gln) + L-glutamate + ADP + phosphate + H(+). It carries out the reaction L-aspartyl-tRNA(Asn) + L-glutamine + ATP + H2O = L-asparaginyl-tRNA(Asn) + L-glutamate + ADP + phosphate + 2 H(+). Functionally, allows the formation of correctly charged Asn-tRNA(Asn) or Gln-tRNA(Gln) through the transamidation of misacylated Asp-tRNA(Asn) or Glu-tRNA(Gln) in organisms which lack either or both of asparaginyl-tRNA or glutaminyl-tRNA synthetases. The reaction takes place in the presence of glutamine and ATP through an activated phospho-Asp-tRNA(Asn) or phospho-Glu-tRNA(Gln). This is Aspartyl/glutamyl-tRNA(Asn/Gln) amidotransferase subunit B from Mycobacterium avium (strain 104).